The following is a 643-amino-acid chain: Transducer protein Htr8 (643 aa).

5 consecutive transmembrane segments (helical) span residues 48-68 (VFVL…GTES), 79-99 (PGIL…LASI), 115-134 (VLAS…EAHF), 149-169 (WLPF…FGMI), and 184-204 (PWVW…ALMA). The region spanning 273–326 (ERLEATANTYGAAMARAADGDLSVRLDPDVENDAMAAIAASFNEMLDETETTIR) is the HAMP domain. Positions 345–581 (GVVEIEDASG…EAVSMIAEVS (237 aa)) constitute a Methyl-accepting transducer domain.

It belongs to the methyl-accepting chemotaxis (MCP) protein family. Methylated by CheR.

Its subcellular location is the cell membrane. Potentially involved in chemo- or phototactic signal transduction. The sequence is that of Transducer protein Htr8 (htr8) from Halobacterium salinarum (strain ATCC 29341 / DSM 671 / R1).